The following is a 755-amino-acid chain: 17S U2 SnRNP complex component HTATSF1 (755 aa).

Disordered regions lie at residues Met-1–Asp-53 and Gly-81–Ser-122. Residue Ser-2 is modified to N-acetylserine. Residues Glu-90–Ser-122 show a composition bias toward basic and acidic residues. RRM domains are found at residues Thr-133–Phe-218 and Arg-264–Gly-349. Positions Arg-259–Tyr-353 are U2AF homology motif (UHM). An N6-acetyllysine modification is found at Lys-297. The disordered stretch occupies residues Arg-380–Glu-415. Residues Gly-381 to Ile-755 form a mediates interaction with the P-TEFb complex region. 4 positions are modified to phosphoserine: Ser-387, Ser-403, Ser-407, and Ser-409. Positions His-405–Glu-415 are enriched in polar residues. Glycyl lysine isopeptide (Lys-Gly) (interchain with G-Cter in SUMO2) cross-links involve residues Lys-429 and Lys-430. The disordered stretch occupies residues Lys-433–Ile-755. A phosphoserine mark is found at Ser-445, Ser-452, and Ser-453. Positions Cys-462 to Phe-476 are enriched in basic and acidic residues. Ser-481, Ser-485, Ser-494, Ser-498, Ser-521, and Ser-529 each carry phosphoserine. Positions Leu-508 to Glu-538 are enriched in basic and acidic residues. Residues Ser-539 to Cys-552 show a composition bias toward acidic residues. Over residues Ser-553 to Arg-563 the composition is skewed to basic and acidic residues. Ser-557, Ser-561, and Ser-579 each carry phosphoserine. Over residues Glu-564–Ser-579 the composition is skewed to acidic residues. Residues Glu-580 to Lys-590 show a composition bias toward basic and acidic residues. The span at Glu-591–Gly-606 shows a compositional bias: acidic residues. Phosphoserine occurs at positions 597, 600, 607, 616, and 624. 2 stretches are compositionally biased toward acidic residues: residues Glu-613–Thr-633 and Asp-640–Ala-651. Thr-633 is modified (phosphothreonine). The residue at position 642 (Ser-642) is a Phosphoserine. Positions Asp-652–Glu-674 are enriched in basic and acidic residues. The segment covering Glu-675–Ser-713 has biased composition (acidic residues). Phosphoserine is present on residues Ser-676, Ser-702, Ser-713, Ser-714, and Ser-721. Basic and acidic residues predominate over residues Ser-714–Gly-725. At Ser-748 the chain carries Phosphoserine; by CK2.

It belongs to the HTATSF1 family. In terms of assembly, component of the 17S U2 SnRNP complex, a ribonucleoprotein complex that contains small nuclear RNA (snRNA) U2 and a number of specific proteins. Within the 17S U2 SnRNP complex, interacts (via UHM region) directly with SF3B1. Component of a complex which is at least composed of HTATSF1/Tat-SF1, the P-TEFb complex components CDK9 and CCNT1, RNA polymerase II, SUPT5H, and NCL/nucleolin. Interacts with GTF2F2/RAP30 and POLR2A. Interacts with TCERG1/CA150. Interacts with (poly-ADP-ribosylated) RPA1; promoting HTATSF1 recruitment to DNA damage sites. Interacts (when phosphorylated) with TOPBP1; promoting recruitment of TOPBP1 to DNA damage sites during S-phase. In terms of processing, phosphorylation at Ser-748 by CK2 during S-phase in response to DNA damage promotes interaction with TOPBP1 and double-strand break (DSB) repair via homologous recombination. As to expression, widely expressed.

The protein localises to the nucleus. Its subcellular location is the chromosome. Component of the 17S U2 SnRNP complex of the spliceosome, a large ribonucleoprotein complex that removes introns from transcribed pre-mRNAs. The 17S U2 SnRNP complex (1) directly participates in early spliceosome assembly and (2) mediates recognition of the intron branch site during pre-mRNA splicing by promoting the selection of the pre-mRNA branch-site adenosine, the nucleophile for the first step of splicing. Within the 17S U2 SnRNP complex, HTATSF1 is required to stabilize the branchpoint-interacting stem loop. HTATSF1 is displaced from the 17S U2 SnRNP complex before the stable addition of the 17S U2 SnRNP complex to the spliceosome, destabilizing the branchpoint-interacting stem loop and allowing to probe intron branch site sequences. Also acts as a regulator of transcriptional elongation, possibly by mediating the reciprocal stimulatory effect of splicing on transcriptional elongation. Involved in double-strand break (DSB) repair via homologous recombination in S-phase by promoting the recruitment of TOPBP1 to DNA damage sites. Mechanistically, HTATSF1 is (1) recruited to DNA damage sites in S-phase via interaction with poly-ADP-ribosylated RPA1 and (2) phosphorylated by CK2, promoting recruitment of TOPBP1, thereby facilitating RAD51 nucleofilaments formation and RPA displacement, followed by homologous recombination. In terms of biological role, (Microbial infection) In case of infection by HIV-1, it is up-regulated by the HIV-1 proteins NEF and gp120, acts as a cofactor required for the Tat-enhanced transcription of the virus. The sequence is that of 17S U2 SnRNP complex component HTATSF1 from Homo sapiens (Human).